Consider the following 313-residue polypeptide: Formimidoylglutamase (313 aa).

6 residues coordinate Mn(2+): histidine 130, aspartate 155, histidine 157, aspartate 159, aspartate 241, and aspartate 243.

Belongs to the arginase family. Requires Mn(2+) as cofactor.

It carries out the reaction N-formimidoyl-L-glutamate + H2O = formamide + L-glutamate. Its pathway is amino-acid degradation; L-histidine degradation into L-glutamate; L-glutamate from N-formimidoyl-L-glutamate (hydrolase route): step 1/1. Catalyzes the conversion of N-formimidoyl-L-glutamate to L-glutamate and formamide. The sequence is that of Formimidoylglutamase from Salmonella schwarzengrund (strain CVM19633).